A 46-amino-acid polypeptide reads, in one-letter code: Large ribosomal subunit protein bL34c (46 aa).

Residues 1–46 (MSKRTLEGSHRKKVRKSGFLSRSQSPTGRRILKARRKKGRKMLVKY) form a disordered region. The span at 30 to 46 (RILKARRKKGRKMLVKY) shows a compositional bias: basic residues.

The protein belongs to the bacterial ribosomal protein bL34 family.

It localises to the plastid. Its subcellular location is the cyanelle. The chain is Large ribosomal subunit protein bL34c (rpl34) from Cyanophora paradoxa.